The sequence spans 222 residues: C-8 sterol isomerase ERG2 (222 aa).

A helical transmembrane segment spans residues 3–23; sequence FFPLLLLIGVVGYIMNVLFTT.

This sequence belongs to the ERG2 family.

The protein localises to the endoplasmic reticulum membrane. The enzyme catalyses fecosterol = episterol. Its pathway is steroid metabolism; ergosterol biosynthesis; ergosterol from zymosterol: step 2/5. Its activity is regulated as follows. Catalytic activity is inhibited by the morphilines tridemorph, fenpropimorph, and fenpropidin. Its function is as follows. C-8 sterol isomerase; part of the third module of ergosterol biosynthesis pathway that includes the late steps of the pathway. ERG2 catalyzes the reaction which results in unsaturation at C-7 in the B ring of sterols and thus converts fecosterol to episterol. The third module or late pathway involves the ergosterol synthesis itself through consecutive reactions that mainly occur in the endoplasmic reticulum (ER) membrane. Firstly, the squalene synthase ERG9 catalyzes the condensation of 2 farnesyl pyrophosphate moieties to form squalene, which is the precursor of all steroids. Squalene synthase is crucial for balancing the incorporation of farnesyl diphosphate (FPP) into sterol and nonsterol isoprene synthesis. Secondly, the squalene epoxidase ERG1 catalyzes the stereospecific oxidation of squalene to (S)-2,3-epoxysqualene, which is considered to be a rate-limiting enzyme in steroid biosynthesis. Then, the lanosterol synthase ERG7 catalyzes the cyclization of (S)-2,3 oxidosqualene to lanosterol, a reaction that forms the sterol core. In the next steps, lanosterol is transformed to zymosterol through a complex process involving various demethylation, reduction and desaturation reactions. The lanosterol 14-alpha-demethylase ERG11 (also known as CYP51) catalyzes C14-demethylation of lanosterol to produce 4,4'-dimethyl cholesta-8,14,24-triene-3-beta-ol, which is critical for ergosterol biosynthesis. The C-14 reductase ERG24 reduces the C14=C15 double bond of 4,4-dimethyl-cholesta-8,14,24-trienol to produce 4,4-dimethyl-cholesta-8,24-dienol. 4,4-dimethyl-cholesta-8,24-dienol is substrate of the C-4 demethylation complex ERG25-ERG26-ERG27 in which ERG25 catalyzes the three-step monooxygenation required for the demethylation of 4,4-dimethyl and 4alpha-methylsterols, ERG26 catalyzes the oxidative decarboxylation that results in a reduction of the 3-beta-hydroxy group at the C-3 carbon to an oxo group, and ERG27 is responsible for the reduction of the keto group on the C-3. ERG28 has a role as a scaffold to help anchor ERG25, ERG26 and ERG27 to the endoplasmic reticulum and ERG29 regulates the activity of the iron-containing C4-methylsterol oxidase ERG25. Then, the sterol 24-C-methyltransferase ERG6 catalyzes the methyl transfer from S-adenosyl-methionine to the C-24 of zymosterol to form fecosterol. The C-8 sterol isomerase ERG2 catalyzes the reaction which results in unsaturation at C-7 in the B ring of sterols and thus converts fecosterol to episterol. The sterol-C5-desaturase ERG3 then catalyzes the introduction of a C-5 double bond in the B ring to produce 5-dehydroepisterol. The C-22 sterol desaturase ERG5 further converts 5-dehydroepisterol into ergosta-5,7,22,24(28)-tetraen-3beta-ol by forming the C-22(23) double bond in the sterol side chain. Finally, ergosta-5,7,22,24(28)-tetraen-3beta-ol is substrate of the C-24(28) sterol reductase ERG4 to produce ergosterol. The sequence is that of C-8 sterol isomerase ERG2 from Saccharomyces cerevisiae (strain ATCC 204508 / S288c) (Baker's yeast).